Here is a 155-residue protein sequence, read N- to C-terminus: Ribosomal RNA large subunit methyltransferase H (155 aa).

Residues leucine 73, glycine 104, and leucine 123–leucine 128 contribute to the S-adenosyl-L-methionine site.

It belongs to the RNA methyltransferase RlmH family. As to quaternary structure, homodimer.

The protein resides in the cytoplasm. It carries out the reaction pseudouridine(1915) in 23S rRNA + S-adenosyl-L-methionine = N(3)-methylpseudouridine(1915) in 23S rRNA + S-adenosyl-L-homocysteine + H(+). In terms of biological role, specifically methylates the pseudouridine at position 1915 (m3Psi1915) in 23S rRNA. The sequence is that of Ribosomal RNA large subunit methyltransferase H from Pseudomonas savastanoi pv. phaseolicola (strain 1448A / Race 6) (Pseudomonas syringae pv. phaseolicola (strain 1448A / Race 6)).